The following is a 369-amino-acid chain: Maltose/maltodextrin import ATP-binding protein MalK (369 aa).

The 231-residue stretch at 4-234 (VTLRNVCKSY…PKNRFVAGFI (231 aa)) folds into the ABC transporter domain. Residue 36 to 43 (GPSGCGKS) participates in ATP binding.

It belongs to the ABC transporter superfamily. Maltooligosaccharide importer (TC 3.A.1.1.1) family. In terms of assembly, the complex is composed of two ATP-binding proteins (MalK), two transmembrane proteins (MalG and MalK) and a solute-binding protein (MalE).

It is found in the cell inner membrane. It carries out the reaction D-maltose(out) + ATP + H2O = D-maltose(in) + ADP + phosphate + H(+). In terms of biological role, part of the ABC transporter complex MalEFGK involved in maltose/maltodextrin import. Responsible for energy coupling to the transport system. The chain is Maltose/maltodextrin import ATP-binding protein MalK from Aliivibrio fischeri (strain ATCC 700601 / ES114) (Vibrio fischeri).